A 152-amino-acid polypeptide reads, in one-letter code: Deoxyuridine 5'-triphosphate nucleotidohydrolase (152 aa).

Residues 71 to 73 (RSG), Asn-84, 88 to 90 (LVD), and Met-98 each bind substrate.

This sequence belongs to the dUTPase family. The cofactor is Mg(2+).

The enzyme catalyses dUTP + H2O = dUMP + diphosphate + H(+). It functions in the pathway pyrimidine metabolism; dUMP biosynthesis; dUMP from dCTP (dUTP route): step 2/2. Functionally, this enzyme is involved in nucleotide metabolism: it produces dUMP, the immediate precursor of thymidine nucleotides and it decreases the intracellular concentration of dUTP so that uracil cannot be incorporated into DNA. The chain is Deoxyuridine 5'-triphosphate nucleotidohydrolase from Shewanella oneidensis (strain ATCC 700550 / JCM 31522 / CIP 106686 / LMG 19005 / NCIMB 14063 / MR-1).